The chain runs to 511 residues: Cytochrome P450 monooxygenase esdpI (511 aa).

Residues 14-34 form a helical membrane-spanning segment; it reads VRAGLAIGVAILAIIVLFPGI. Cys-453 is a heme binding site.

Belongs to the cytochrome P450 family. Requires heme as cofactor.

Its subcellular location is the membrane. The protein operates within secondary metabolite biosynthesis; terpenoid biosynthesis. Functionally, cytochrome P450 monooxygenase; part of the cluster that mediates the biosynthesis of shearones, diterpenoid pyrones (DPs) which are structurally diverse meroterpenoids consisting of a diterpene linked by a pyrone, and which may exhibit a range of bioactivities. Whitin the pathway, esdpI takes part in the molecular scaffold modification via the hydroxylation at C-20 and can transform shearone C into shearone G. The molecular scaffold is commonly biosynthesized by a series of enzymes including the non-reducing polyketide synthase (NR-PKS) esdpA that generates an alpha-pyrone; the prenyltransferase esdpC that attaches a geranylgeranyl pyrophosphate (GGPP) produced by the GGPP synthase (GGPPS) esdpD onto the pyrone unit; the FAD-dependent monooxygenase esdpE that converts an olefin on the diterpene unit into an epoxide; and the terpene cyclase esdpB that catalyzes the cyclization reactions to give the molecular backbone shearone A. In the modification steps, esdpF oxidizes the hydroxy group to a ketone at C-3 and esdpG then attaches hydroxy groups at both C-11 and C-12. After that, esdpI hydroxylates at C-20 and esdpH hydroxylates at C-6'. The ether bridge is generated by nucleophilic attack of the hydroxy group at C-20 to the carbonyl carbon at C-3. EsdpH can also functions prior to esdpI. The different combinations of these modification enzymes lead to the production of diverse shearone derivatives, shearone I being the end product of the pathway. The alpha-ketoglutarate-dependent dioxygenase esdpJ seems not to be involved in this pathway. The polypeptide is Cytochrome P450 monooxygenase esdpI (Penicillium shearii (Eupenicillium shearii)).